Consider the following 217-residue polypeptide: Ras-related protein RABA1e (217 aa).

Position 20–27 (20–27) interacts with GTP; it reads GDSGVGKS. Positions 42–50 match the Effector region motif; the sequence is SKSTIGVEF. GTP-binding positions include 68 to 72, 126 to 129, and 156 to 157; these read DTAGQ, NKAD, and SA. S-geranylgeranyl cysteine attachment occurs at residues Cys-214 and Cys-215.

Belongs to the small GTPase superfamily. Rab family.

The protein localises to the cell membrane. In terms of biological role, intracellular vesicle trafficking and protein transport. The protein is Ras-related protein RABA1e (RABA1E) of Arabidopsis thaliana (Mouse-ear cress).